We begin with the raw amino-acid sequence, 312 residues long: Probable myosin light chain kinase DDB_G0282429 (312 aa).

The segment at 1-28 (MDRMDSSDEEIDNISDDELQSGDEIEVE) is disordered. The span at 7 to 27 (SDEEIDNISDDELQSGDEIEV) shows a compositional bias: acidic residues. Residues 38 to 290 (YILGNEIGRG…FEQCLIHPWV (253 aa)) form the Protein kinase domain. Residues 44-52 (IGRGAFSIV) and Lys-67 contribute to the ATP site. The active-site Proton acceptor is the Asp-158.

The protein belongs to the protein kinase superfamily. CAMK Ser/Thr protein kinase family. CaMK subfamily.

The enzyme catalyses L-seryl-[myosin light chain] + ATP = O-phospho-L-seryl-[myosin light chain] + ADP + H(+). The catalysed reaction is L-threonyl-[myosin light chain] + ATP = O-phospho-L-threonyl-[myosin light chain] + ADP + H(+). Its activity is regulated as follows. Does not have a calmodulin-binding domain. Its function is as follows. May phosphorylate a specific serine in the N-terminus of a myosin light chain. This Dictyostelium discoideum (Social amoeba) protein is Probable myosin light chain kinase DDB_G0282429.